Reading from the N-terminus, the 486-residue chain is Glycogen synthase (486 aa).

Residue Lys-20 coordinates ADP-alpha-D-glucose.

It belongs to the glycosyltransferase 1 family. Bacterial/plant glycogen synthase subfamily.

It catalyses the reaction [(1-&gt;4)-alpha-D-glucosyl](n) + ADP-alpha-D-glucose = [(1-&gt;4)-alpha-D-glucosyl](n+1) + ADP + H(+). It functions in the pathway glycan biosynthesis; glycogen biosynthesis. Synthesizes alpha-1,4-glucan chains using ADP-glucose. This chain is Glycogen synthase, found in Aeromonas salmonicida (strain A449).